The primary structure comprises 179 residues: Large ribosomal subunit protein uL5 (179 aa).

This sequence belongs to the universal ribosomal protein uL5 family. Part of the 50S ribosomal subunit; part of the 5S rRNA/L5/L18/L25 subcomplex. Contacts the 5S rRNA and the P site tRNA. Forms a bridge to the 30S subunit in the 70S ribosome.

Its function is as follows. This is one of the proteins that bind and probably mediate the attachment of the 5S RNA into the large ribosomal subunit, where it forms part of the central protuberance. In the 70S ribosome it contacts protein S13 of the 30S subunit (bridge B1b), connecting the 2 subunits; this bridge is implicated in subunit movement. Contacts the P site tRNA; the 5S rRNA and some of its associated proteins might help stabilize positioning of ribosome-bound tRNAs. The sequence is that of Large ribosomal subunit protein uL5 from Syntrophus aciditrophicus (strain SB).